A 133-amino-acid polypeptide reads, in one-letter code: U6 snRNA-associated Sm-like protein LSm1 (133 aa).

The 76-residue stretch at 5–80 (PGTASLIEDI…VVLLGEIDLE (76 aa)) folds into the Sm domain. A Phosphoserine modification is found at serine 123. At threonine 129 the chain carries Phosphothreonine.

Belongs to the snRNP Sm proteins family. Interacts with SLBP; interaction with SLBP occurs when histone mRNA is being rapidly degraded during the S phase. LSm subunits form a heteromer with a donut shape.

Its subcellular location is the cytoplasm. The protein localises to the P-body. Plays a role in the degradation of histone mRNAs, the only eukaryotic mRNAs that are not polyadenylated. Probably also part of an LSm subunits-containing complex involved in the general process of mRNA degradation. The protein is U6 snRNA-associated Sm-like protein LSm1 (LSM1) of Homo sapiens (Human).